A 405-amino-acid polypeptide reads, in one-letter code: Lipase lipl-1 (405 aa).

The signal sequence occupies residues 1–20 (MRSWSTVMLAVLATAATVFG). The N-linked (GlcNAc...) asparagine glycan is linked to Asn66. Catalysis depends on Ser169, which acts as the Nucleophile. Residue Asn273 is glycosylated (N-linked (GlcNAc...) asparagine). Catalysis depends on charge relay system residues Asp344 and His376.

The protein belongs to the AB hydrolase superfamily. Lipase family.

It localises to the secreted. The protein localises to the lysosome lumen. In terms of biological role, lipase that, together with lipl-3, plays a role in the response to nutrient deprivation by controlling lipid metabolism. Specifically, involved in the breakdown of lipids during lipophagy, a process during which lipids contained in lipid droplets that have been delivered to lysosomes by autophagy are degraded. This Caenorhabditis elegans protein is Lipase lipl-1.